The primary structure comprises 984 residues: Translation initiation factor IF-2 (984 aa).

Disordered stretches follow at residues 92 to 267 and 280 to 392; these read KKRT…ERRR and MNAP…EEHV. Residues 104-123 are compositionally biased toward low complexity; that stretch reads PATPEVQPVAEAPAAAPAAP. Basic and acidic residues predominate over residues 124-177; the sequence is RIDEAELARREEEARRQAELIRRQEEELAEKRRLREEAEAREREQAEKAERAEQ. Residues 193–235 show a composition bias toward low complexity; sequence DAAAAAPAKEAAKPAAAPVAAAAAAAEQQAADTKLAAQTAATQ. Basic and acidic residues-rich tracts occupy residues 236–267 and 291–302; these read AKED…ERRR and KAPEKPQPEKAA. Low complexity predominate over residues 310–335; it reads PAAPAARPGAPAAPGAAAAPGAAGAG. Basic and acidic residues predominate over residues 351–361; sequence PAKKKEIKTRG. Residues 363–375 are compositionally biased toward gly residues; sequence ASGGVGRGNWRGG. Residues 381–392 are compositionally biased toward basic and acidic residues; it reads GSNDRGGHEEHV. The tr-type G domain maps to 484–653; sequence PRAPVVTVMG…LLQAEVLELK (170 aa). The tract at residues 493–500 is G1; the sequence is GHVDHGKT. 493–500 contacts GTP; the sequence is GHVDHGKT. Positions 518 to 522 are G2; that stretch reads GITQH. A G3 region spans residues 539-542; the sequence is DTPG. Residues 539–543 and 593–596 contribute to the GTP site; these read DTPGH and NKID. The interval 593–596 is G4; it reads NKID. Residues 629–631 form a G5 region; the sequence is SAK.

It belongs to the TRAFAC class translation factor GTPase superfamily. Classic translation factor GTPase family. IF-2 subfamily.

Its subcellular location is the cytoplasm. One of the essential components for the initiation of protein synthesis. Protects formylmethionyl-tRNA from spontaneous hydrolysis and promotes its binding to the 30S ribosomal subunits. Also involved in the hydrolysis of GTP during the formation of the 70S ribosomal complex. This chain is Translation initiation factor IF-2, found in Variovorax paradoxus (strain S110).